A 558-amino-acid chain; its full sequence is Ubiquitin carboxyl-terminal hydrolase 30 homolog (558 aa).

The chain crosses the membrane as a helical span at residues 6 to 26 (ILMAAGVTVAAVVGAFVFWGP). The region spanning 39–550 (AGLHNFGLTC…PAYLLFYDRG (512 aa)) is the USP domain. Catalysis depends on Cys48, which acts as the Nucleophile. Residues 267 to 300 (LATPMLGGERSSRPRLPQSQQQQDEGLNRRVSSS) are disordered. Positions 280-289 (PRLPQSQQQQ) are enriched in low complexity. His506 serves as the catalytic Proton acceptor.

It belongs to the peptidase C19 family.

It localises to the mitochondrion outer membrane. It catalyses the reaction Thiol-dependent hydrolysis of ester, thioester, amide, peptide and isopeptide bonds formed by the C-terminal Gly of ubiquitin (a 76-residue protein attached to proteins as an intracellular targeting signal).. Functionally, deubiquitinating enzyme that acts as a key inhibitor of mitophagy by counteracting the action of parkin (park). The chain is Ubiquitin carboxyl-terminal hydrolase 30 homolog from Drosophila melanogaster (Fruit fly).